The sequence spans 502 residues: Cytochrome P450 2J2 (502 aa).

Cys448 contributes to the heme binding site.

Belongs to the cytochrome P450 family. Requires heme as cofactor. As to expression, highly expressed in heart, present at lower levels in liver, kidney and skeletal muscle (at protein level).

It is found in the endoplasmic reticulum membrane. It localises to the microsome membrane. It catalyses the reaction (5Z,8Z,11Z,14Z)-eicosatetraenoate + reduced [NADPH--hemoprotein reductase] + O2 = 5,6-epoxy-(8Z,11Z,14Z)-eicosatrienoate + oxidized [NADPH--hemoprotein reductase] + H2O + H(+). The catalysed reaction is (5Z,8Z,11Z,14Z)-eicosatetraenoate + reduced [NADPH--hemoprotein reductase] + O2 = (8R,9S)-epoxy-(5Z,11Z,14Z)-eicosatrienoate + oxidized [NADPH--hemoprotein reductase] + H2O + H(+). It carries out the reaction (5Z,8Z,11Z,14Z)-eicosatetraenoate + reduced [NADPH--hemoprotein reductase] + O2 = (8S,9R)-epoxy-(5Z,11Z,14Z)-eicosatrienoate + oxidized [NADPH--hemoprotein reductase] + H2O + H(+). The enzyme catalyses (5Z,8Z,11Z,14Z)-eicosatetraenoate + reduced [NADPH--hemoprotein reductase] + O2 = (11R,12S)-epoxy-(5Z,8Z,14Z)-eicosatrienoate + oxidized [NADPH--hemoprotein reductase] + H2O + H(+). It catalyses the reaction (5Z,8Z,11Z,14Z)-eicosatetraenoate + reduced [NADPH--hemoprotein reductase] + O2 = (11S,12R)-epoxy-(5Z,8Z,14Z)-eicosatrienoate + oxidized [NADPH--hemoprotein reductase] + H2O + H(+). The catalysed reaction is (5Z,8Z,11Z,14Z)-eicosatetraenoate + reduced [NADPH--hemoprotein reductase] + O2 = (14R,15S)-epoxy-(5Z,8Z,11Z)-eicosatrienoate + oxidized [NADPH--hemoprotein reductase] + H2O + H(+). It carries out the reaction (5Z,8Z,11Z,14Z)-eicosatetraenoate + reduced [NADPH--hemoprotein reductase] + O2 = (14S,15R)-epoxy-(5Z,8Z,11Z)-eicosatrienoate + oxidized [NADPH--hemoprotein reductase] + H2O + H(+). The enzyme catalyses (15S)-hydroperoxy-(5Z,8Z,11Z,13E)-eicosatetraenoate = (13S)-hydroxy-(14S,15S)-epoxy-(5Z,8Z,11Z)-eicosatrienoate. It catalyses the reaction (15S)-hydroperoxy-(5Z,8Z,11Z,13E)-eicosatetraenoate = (13R)-hydroxy-(14S,15S)-epoxy-(5Z,8Z,11Z)-eicosatrienoate. The catalysed reaction is (5Z,8Z,11Z,14Z,17Z)-eicosapentaenoate + reduced [NADPH--hemoprotein reductase] + O2 = (17R,18S)-epoxy-(5Z,8Z,11Z,14Z)-eicosatetraenoate + oxidized [NADPH--hemoprotein reductase] + H2O + H(+). It carries out the reaction (5Z,8Z,11Z,14Z,17Z)-eicosapentaenoate + reduced [NADPH--hemoprotein reductase] + O2 = (17S,18R)-epoxy-(5Z,8Z,11Z,14Z)-eicosatetraenoate + oxidized [NADPH--hemoprotein reductase] + H2O + H(+). The enzyme catalyses (4Z,7Z,10Z,13Z,16Z,19Z)-docosahexaenoate + reduced [NADPH--hemoprotein reductase] + O2 = (19R,20S)-epoxy-(4Z,7Z,10Z,13Z,16Z)-docosapentaenoate + oxidized [NADPH--hemoprotein reductase] + H2O + H(+). It catalyses the reaction (4Z,7Z,10Z,13Z,16Z,19Z)-docosahexaenoate + reduced [NADPH--hemoprotein reductase] + O2 = (19S,20R)-epoxy-(4Z,7Z,10Z,13Z,16Z)-docosapentaenoate + oxidized [NADPH--hemoprotein reductase] + H2O + H(+). The catalysed reaction is albendazole + reduced [NADPH--hemoprotein reductase] + O2 = hydroxyalbendazole + oxidized [NADPH--hemoprotein reductase] + H2O + H(+). It carries out the reaction albendazole + reduced [NADPH--hemoprotein reductase] + O2 = albendazole S-oxide + oxidized [NADPH--hemoprotein reductase] + H2O + H(+). The enzyme catalyses fenbendazole + reduced [NADPH--hemoprotein reductase] + O2 = fenbendazole S-oxide + oxidized [NADPH--hemoprotein reductase] + H2O + H(+). It functions in the pathway lipid metabolism; arachidonate metabolism. In terms of biological role, a cytochrome P450 monooxygenase involved in the metabolism of polyunsaturated fatty acids (PUFA) in the cardiovascular system. Mechanistically, uses molecular oxygen inserting one oxygen atom into a substrate, and reducing the second into a water molecule, with two electrons provided by NADPH via cytochrome P450 reductase (NADPH--hemoprotein reductase). Catalyzes the epoxidation of double bonds of PUFA. Converts arachidonic acid to four regioisomeric epoxyeicosatrienoic acids (EpETrE), likely playing a major role in the epoxidation of endogenous cardiac arachidonic acid pools. In endothelial cells, participates in eicosanoids metabolism by converting hydroperoxide species into hydroxy epoxy metabolites. In combination with 15-lipoxygenase metabolizes arachidonic acid and converts hydroperoxyicosatetraenoates (HpETEs) into hydroxy epoxy eicosatrienoates (HEETs), which are precursors of vasodilatory trihydroxyicosatrienoic acids (THETAs). This hydroperoxide isomerase activity is NADPH- and O2-independent. Catalyzes the monooxygenation of a various xenobiotics, such as danazol, amiodarone, terfenadine, astemizole, thioridazine, tamoxifen, cyclosporin A and nabumetone. Catalyzes hydroxylation of the anthelmintics albendazole and fenbendazole. Catalyzes the sulfoxidation of fenbedazole. This Homo sapiens (Human) protein is Cytochrome P450 2J2.